We begin with the raw amino-acid sequence, 33 residues long: ELEPQGPPHLGTDLSKKQGPWAEEEAAYGWMDF.

Positions 1–21 are disordered; sequence ELEPQGPPHLGTDLSKKQGPW. Gln18 carries the pyrrolidone carboxylic acid modification. Tyr28 carries the sulfotyrosine modification. Phe33 is subject to Phenylalanine amide.

This sequence belongs to the gastrin/cholecystokinin family.

It is found in the secreted. In terms of biological role, gastrin stimulates the stomach mucosa to produce and secrete hydrochloric acid and the pancreas to secrete its digestive enzymes. It also stimulates smooth muscle contraction and increases blood circulation and water secretion in the stomach and intestine. This chain is Gastrin (GAST), found in Chinchilla chinchilla (Short-tailed chinchilla).